The primary structure comprises 301 residues: Oxygen-dependent coproporphyrinogen-III oxidase (301 aa).

Residues 49–58 (VMVDGAVIEK) are important for dimerization. Position 93 (S93) interacts with substrate. H107 acts as the Proton donor in catalysis. Substrate-binding positions include 109–111 (NVR) and 259–261 (GGR). Residues 241-276 (YAEFNLVIDRGTKFGLQSGGRTESILISLPPRARWG) form an important for dimerization region.

The protein belongs to the aerobic coproporphyrinogen-III oxidase family. As to quaternary structure, homodimer.

The protein resides in the cytoplasm. It catalyses the reaction coproporphyrinogen III + O2 + 2 H(+) = protoporphyrinogen IX + 2 CO2 + 2 H2O. The protein operates within porphyrin-containing compound metabolism; protoporphyrin-IX biosynthesis; protoporphyrinogen-IX from coproporphyrinogen-III (O2 route): step 1/1. In terms of biological role, involved in the heme biosynthesis. Catalyzes the aerobic oxidative decarboxylation of propionate groups of rings A and B of coproporphyrinogen-III to yield the vinyl groups in protoporphyrinogen-IX. In Leishmania major, this protein is Oxygen-dependent coproporphyrinogen-III oxidase.